The chain runs to 395 residues: MSVARIVFPPLSHVGWGALDQLVPEVKRLGAKHILVITDPMLVKIGLVDQVTSPLRQEGYSVHVYTDVVPEPPLETGEKAVAFARDGKFDLVIGVGGGSALDLAKLAAVLAVHDGSVADYLNLTGTRTLEKKGLPKILIPTTSGTGSEVTNISVLSLETTKDVVTHDYLLADVAIVDPQLTVSVPPRVTAATGIDALTHAVEAYVSVNASPTSDGLAVAAIRLISRSLRKAVANGSDKQARIDMANGSYLAGLAFFNAGVAGVHALAYPLGGQFHIAHGESNAVLLPYVMGYIRQSCTKRMADIFNALGGNSSFLSEVEASYRCVEELERFVADVGIPKTLGGFGIPESALESLTKDAVQQKRLLARSPLPLLEADIRAIYEAAFAGTIVEPHKA.

NAD(+)-binding positions include glycine 98–aspartate 102 and threonine 141–glycine 144.

The protein belongs to the iron-containing alcohol dehydrogenase family. Homooctamer.

The enzyme catalyses glycerol + NAD(+) = dihydroxyacetone + NADH + H(+). It catalyses the reaction a long-chain primary fatty alcohol + 2 NAD(+) + H2O = a long-chain fatty acid + 2 NADH + 3 H(+). In terms of biological role, long-chain alkyl alcohol dehydrogenase that can oxidize a broad range of alkyl alcohols from ethanol to 1-triacontanol (C2 to C30) as well as 1,3-propanediol and acetaldehyde. The best substrate is ethanol. Also oxidizes glycerol. The protein is Long-chain-alcohol dehydrogenase 1 (adh1) of Geobacillus thermodenitrificans (strain NG80-2).